The following is a 343-amino-acid chain: uncharacterized protein (343 aa).

Gly-33–Ser-40 contributes to the ATP binding site.

Belongs to the archaeal ATPase family.

This is an uncharacterized protein from Methanocaldococcus jannaschii (strain ATCC 43067 / DSM 2661 / JAL-1 / JCM 10045 / NBRC 100440) (Methanococcus jannaschii).